The sequence spans 151 residues: Kinetoplast-associated protein 1 (151 aa).

The propeptide occupies 1 to 9 (MLRVSVRSL). The interval 13-151 (ASSKAGSKAA…KKGAAKKAHK (139 aa)) is disordered. 3 stretches are compositionally biased toward low complexity: residues 15-49 (SKAG…VPPV), 70-91 (AAAA…TPAK), and 101-111 (SKPSAPKQAAG). Basic residues predominate over residues 112-151 (KMRKAAGKAQRKIKAAARKAAPKKMAKSFGKKGAAKKAHK).

It belongs to the KAP family. In terms of assembly, associates with the kinetoplast DNA network.

The protein localises to the mitochondrion matrix. The protein resides in the kinetoplast. Histone H1-like DNA-binding protein involved in the organization and segregation of kinetoplast DNA (kDNA). The mitochondrial DNA of kinetoplastid protozoa consists of about 5,000 minicircles and 20 to 30 maxicircles. These circular DNAs are held together by catenation into a highly organized compact disk structure referred to as a kinetoplast DNA (kDNA) network. Binds preferentially to a specific fragment of minicircle DNA and is able to compact kDNA networks through DNA charge neutralization and condensation. The chain is Kinetoplast-associated protein 1 (KAP4) from Crithidia fasciculata.